Consider the following 487-residue polypeptide: MAIAEWRQQLANGEVSARELTDHHLARIEAVEPGIHAFLEVTAERARADADRVDEARASGEDLPPLAGIPLAIKDNLCTRGVRTTCSSRMLEQFVPPYESTVTERLWAAGAVLLGKTNLDEFAMGGSTETSAFGPTANPWNPEHVPGGSSGGSAAAVASGECLASIGSDTGGSIRQPASFCGVVGLKPTYGRISRYGLVAFASSLDQVGPFSHSVADAAELLQVMAGADPRDSTCLNAPVPDYCAALGRPVEGLKVGLVKECFEQEGLDPQVKASVLAAAQQLQALGADLVDVSCPRFNDGIATYYVIAPSEASANLARYDGVKYGYRAEDAASLAAMTARSRAEGFGSEVQRRILIGTYALSAGYVDAYYKKAQQVRTLIRRDFDAAFQSVDVLLTPTAPGTAFRNGAHADDPLAMYLSDLLTIPANLAGLPAISVPCGFDTGGLPIGVQLIGNVLEEPLLLQVAHQFEQAADVMKTRPEAAFIPG.

Active-site charge relay system residues include Lys74 and Ser149. The Acyl-ester intermediate role is filled by Ser173.

Belongs to the amidase family. GatA subfamily. Heterotrimer of A, B and C subunits.

It catalyses the reaction L-glutamyl-tRNA(Gln) + L-glutamine + ATP + H2O = L-glutaminyl-tRNA(Gln) + L-glutamate + ADP + phosphate + H(+). In terms of biological role, allows the formation of correctly charged Gln-tRNA(Gln) through the transamidation of misacylated Glu-tRNA(Gln) in organisms which lack glutaminyl-tRNA synthetase. The reaction takes place in the presence of glutamine and ATP through an activated gamma-phospho-Glu-tRNA(Gln). The polypeptide is Glutamyl-tRNA(Gln) amidotransferase subunit A (Synechococcus sp. (strain WH7803)).